A 321-amino-acid chain; its full sequence is Glycerol-3-phosphate phosphatase (321 aa).

The active-site Nucleophile is the aspartate 34. Residues aspartate 34, aspartate 36, and aspartate 260 each coordinate Mg(2+). Aspartate 36 functions as the Proton donor in the catalytic mechanism.

The protein belongs to the HAD-like hydrolase superfamily. CbbY/CbbZ/Gph/YieH family. As to quaternary structure, homodimer. Mg(2+) serves as cofactor. Ubiquitously expressed with higher expression in testis, heart, skeletal muscle and islet tissue (at protein level).

It carries out the reaction O-phospho-L-tyrosyl-[protein] + H2O = L-tyrosyl-[protein] + phosphate. It catalyses the reaction sn-glycerol 1-phosphate + H2O = glycerol + phosphate. The catalysed reaction is sn-glycerol 3-phosphate + H2O = glycerol + phosphate. Inhibited by orthovanadate, beryllium trifluoride, Ca(2+) and EDTA. Glycerol-3-phosphate phosphatase hydrolyzing glycerol-3-phosphate into glycerol. Thereby, regulates the cellular levels of glycerol-3-phosphate a metabolic intermediate of glucose, lipid and energy metabolism. Was also shown to have a 2-phosphoglycolate phosphatase activity and a tyrosine-protein phosphatase activity. However, their physiological relevance is unclear. In vitro, also has a phosphatase activity toward ADP, ATP, GDP and GTP. This Mus musculus (Mouse) protein is Glycerol-3-phosphate phosphatase.